The following is a 319-amino-acid chain: Ficolin-2 (319 aa).

The N-terminal stretch at 1–22 (MVLGSAALFVLSLCVTELTLHA) is a signal peptide. The 57-residue stretch at 45–101 (GCPGLPGALGPKGEAGAKGDRGESGLPGHPGKAGPTGPKGDRGEKGVRGEKGDTGPS) folds into the Collagen-like domain. The tract at residues 53-106 (LGPKGEAGAKGDRGESGLPGHPGKAGPTGPKGDRGEKGVRGEKGDTGPSQSCAT) is disordered. Over residues 83 to 97 (KGDRGEKGVRGEKGD) the composition is skewed to basic and acidic residues. Positions 102-319 (QSCATGPRTC…KVSEMKVRLI (218 aa)) constitute a Fibrinogen C-terminal domain. Cystine bridges form between cysteine 104-cysteine 132 and cysteine 111-cysteine 139. Ca(2+) is bound by residues aspartate 255, aspartate 257, and serine 261. An intrachain disulfide couples cysteine 263 to cysteine 276. Residue asparagine 306 is glycosylated (N-linked (GlcNAc...) asparagine).

It belongs to the ficolin lectin family. As to quaternary structure, homotrimer. Interacts with elastin. Interacts with MASP1 and MASP2.

Its subcellular location is the secreted. Functionally, may function in innate immunity through activation of the lectin complement pathway. Calcium-dependent and GlcNAc-binding lectin. The chain is Ficolin-2 (Fcn2) from Rattus norvegicus (Rat).